The sequence spans 220 residues: Small ribosomal subunit protein uS3c (220 aa).

The region spanning 39-120 (IRDFIKNYVK…KLIIDIIRIT (82 aa)) is the KH type-2 domain.

It belongs to the universal ribosomal protein uS3 family. As to quaternary structure, part of the 30S ribosomal subunit.

The protein resides in the plastid. The polypeptide is Small ribosomal subunit protein uS3c (rps3) (Epifagus virginiana (Beechdrops)).